Consider the following 458-residue polypeptide: RuvB-like helicase 1 (458 aa).

Positions 1–18 are enriched in basic and acidic residues; the sequence is MVQITEVKENQSSRESRT. Residues 1-20 are disordered; the sequence is MVQITEVKENQSSRESRTAA. 73–80 contributes to the ATP binding site; it reads GPPATGKT.

Belongs to the RuvB family. As to quaternary structure, may form heterododecamers with RVB2. Component of the SWR1 chromatin remodeling complex, the INO80 chromatin remodeling complex, and of the R2TP complex.

The protein localises to the nucleus. It carries out the reaction ATP + H2O = ADP + phosphate + H(+). Functionally, DNA helicase which participates in several chromatin remodeling complexes, including the SWR1 and the INO80 complexes. The SWR1 complex mediates the ATP-dependent exchange of histone H2A for the H2A variant HZT1 leading to transcriptional regulation of selected genes by chromatin remodeling. The INO80 complex remodels chromatin by shifting nucleosomes and is involved in DNA repair. Also involved in pre-rRNA processing. The sequence is that of RuvB-like helicase 1 (RVB1) from Candida albicans (strain SC5314 / ATCC MYA-2876) (Yeast).